The chain runs to 287 residues: Putative ankyrin repeat protein R791 (287 aa).

7 ANK repeats span residues 40–71, 76–105, 107–134, 135–164, 165–194, 196–224, and 225–254; these read HNFN…PLVF, NVHD…NIET, NDDV…IDNK, TIFE…DIKA, KDNF…TIDI, DDTY…DYRT, and VDDL…DIEA.

The chain is Putative ankyrin repeat protein R791 from Acanthamoeba polyphaga (Amoeba).